Here is a 272-residue protein sequence, read N- to C-terminus: Dermonecrotic toxin SpeSicTox-betaIB1b (272 aa).

Residue histidine 5 is part of the active site. Residues glutamate 25 and aspartate 27 each coordinate Mg(2+). Histidine 41 acts as the Nucleophile in catalysis. Cystine bridges form between cysteine 45–cysteine 51 and cysteine 47–cysteine 191. Aspartate 85 contributes to the Mg(2+) binding site.

It belongs to the arthropod phospholipase D family. Class II subfamily. Mg(2+) serves as cofactor. In terms of tissue distribution, expressed by the venom gland.

The protein localises to the secreted. The catalysed reaction is an N-(acyl)-sphingosylphosphocholine = an N-(acyl)-sphingosyl-1,3-cyclic phosphate + choline. It carries out the reaction an N-(acyl)-sphingosylphosphoethanolamine = an N-(acyl)-sphingosyl-1,3-cyclic phosphate + ethanolamine. The enzyme catalyses a 1-acyl-sn-glycero-3-phosphocholine = a 1-acyl-sn-glycero-2,3-cyclic phosphate + choline. It catalyses the reaction a 1-acyl-sn-glycero-3-phosphoethanolamine = a 1-acyl-sn-glycero-2,3-cyclic phosphate + ethanolamine. Dermonecrotic toxins cleave the phosphodiester linkage between the phosphate and headgroup of certain phospholipids (sphingolipid and lysolipid substrates), forming an alcohol (often choline) and a cyclic phosphate. This toxin acts on sphingomyelin (SM). It may also act on ceramide phosphoethanolamine (CPE), lysophosphatidylcholine (LPC) and lysophosphatidylethanolamine (LPE), but not on lysophosphatidylserine (LPS), and lysophosphatidylglycerol (LPG). It acts by transphosphatidylation, releasing exclusively cyclic phosphate products as second products. Induces dermonecrosis, hemolysis, increased vascular permeability, edema, inflammatory response, and platelet aggregation. The chain is Dermonecrotic toxin SpeSicTox-betaIB1b from Sicarius peruensis (Six-eyed sand spider).